The sequence spans 47 residues: uncharacterized protein (47 aa).

This is an uncharacterized protein from Escherichia coli.